A 620-amino-acid chain; its full sequence is LysM domain receptor-like kinase 3 (620 aa).

Residues 1 to 23 form the signal peptide; it reads MNLKNGLLLFILFLDCVFFKVES. Topologically, residues 24 to 231 are extracellular; it reads KCVKGCDVAL…YSRTGIAKGS (208 aa). 3 disulfides stabilise this stretch: Cys25–Cys92, Cys29–Cys154, and Cys90–Cys152. Asn46 is a glycosylation site (N-linked (GlcNAc...) asparagine). The LysM 1; degenerate domain occupies 46 to 72; sequence NISNFMQSKIVLTNSFDVIMSYNRDVV. LysM domains follow at residues 102 to 148 and 167 to 210; these read FEYT…KINV and VTYP…VFIP. Chitin-binding positions include 108 to 114 and 136 to 142; these read EGDDYDL and DPNHIPV. Asn147 and Asn199 each carry an N-linked (GlcNAc...) asparagine glycan. Residues 232 to 252 form a helical membrane-spanning segment; sequence AVGIAMAGIFGLLLFVIYIYA. The Cytoplasmic segment spans residues 253–620; it reads KYFQKKEEEK…QSLINLLSTR (368 aa). Residues 265-278 are compositionally biased toward polar residues; that stretch reads LPQTSRAFSTQDAS. The disordered stretch occupies residues 265-292; it reads LPQTSRAFSTQDASGSAEYETSGSSGHA. Phosphoserine is present on residues Ser269 and Ser273. The region spanning 322-595 is the Protein kinase domain; it reads FSLDNKIGQG…RSIVVALMTL (274 aa). ATP is bound by residues 328 to 336 and Lys349; that span reads IGQGGFGAV. Asp441 functions as the Proton acceptor in the catalytic mechanism.

The protein belongs to the protein kinase superfamily. Ser/Thr protein kinase family. As to quaternary structure, forms homodimers and homooligomers. Forms heteromeric complexes with NFP at the cell periphery in nodules. Interacts with PUB1. In terms of processing, autophosphorylated. Expressed in the epidermal and root hair cells of the developing root hair zone during nonsymbiotic growth. Accumulates in roots and nodules during symbiotic growth with rhizobia. Localized at the cell periphery in a narrow zone of about two cell layers (e.g. L1/L2 zone) at the nodule apex upon infection by rhizobia, from the meristem to the infection zone (at protein level).

It is found in the cell membrane. Its subcellular location is the vacuole lumen. The catalysed reaction is L-seryl-[protein] + ATP = O-phospho-L-seryl-[protein] + ADP + H(+). The enzyme catalyses L-threonyl-[protein] + ATP = O-phospho-L-threonyl-[protein] + ADP + H(+). Putative receptor for S.meliloti Nod factor signals essential for the establishment of the nitrogen-fixing, root nodule symbiosis with S.meliloti. Involved in the control of root hair curling after S.meliloti infection, probably by modulating the reorganization of the microtubular cytoskeleton in epidermal and cortical cells. Regulates a subset of Nod factor-induced genes. The protein is LysM domain receptor-like kinase 3 of Medicago truncatula (Barrel medic).